Consider the following 85-residue polypeptide: Kappa-theraphotoxin-Gr1a (85 aa).

Residues 1–21 form the signal peptide; sequence MKTSVFAAILGLALFAVLCSG. Residues 22–49 constitute a propeptide that is removed on maturation; sequence SELQEKDLKETLLSAIMETALEAQPEER. Cystine bridges form between C51-C65, C58-C70, and C64-C77. The involved in active face stretch occupies residues 53-55; that stretch reads YLF.

This sequence belongs to the neurotoxin 10 (Hwtx-1) family. 09 (HaTx) subfamily. In terms of tissue distribution, expressed by the venom gland.

Its subcellular location is the secreted. Functionally, inhibits Kv2.1/KCNB1 and Kv4.2/KCND2 voltage-gated potassium channels. Acts as a gating modifier by shifting channel openings to more depolarized voltages and acts via the occupancy of multiple binding sites on the channel. The toxin binding sites are situated on the S3-S4 extracellular linker of the channel. At least two hanatoxin molecules can occupy the Kv2.1/KCNB1 channel, and maybe more (three or four). Can also inhibit calcium channels (Cav2.1/CACNA1A). Needs to partition into the membrane in order to bind to the channel. The polypeptide is Kappa-theraphotoxin-Gr1a (Grammostola rosea (Chilean rose tarantula)).